The chain runs to 727 residues: 1,4-alpha-glucan branching enzyme GlgB (727 aa).

The Nucleophile role is filled by Asp405. Residue Glu458 is the Proton donor of the active site.

The protein belongs to the glycosyl hydrolase 13 family. GlgB subfamily. As to quaternary structure, monomer.

It carries out the reaction Transfers a segment of a (1-&gt;4)-alpha-D-glucan chain to a primary hydroxy group in a similar glucan chain.. It participates in glycan biosynthesis; glycogen biosynthesis. Its function is as follows. Catalyzes the formation of the alpha-1,6-glucosidic linkages in glycogen by scission of a 1,4-alpha-linked oligosaccharide from growing alpha-1,4-glucan chains and the subsequent attachment of the oligosaccharide to the alpha-1,6 position. The chain is 1,4-alpha-glucan branching enzyme GlgB from Yersinia pestis bv. Antiqua (strain Antiqua).